We begin with the raw amino-acid sequence, 291 residues long: MSEKLQKVLARAGHGSRREIESIIEAGRVSVDGKIAKLGDRVEVTPGLKIRIDGHLISVRESAEQICRVLAYYKPEGELCTRNDPEGRPTVFDRLPKLRGARWIAVGRLDVNTCGLLLFTTDGELANRLMHPSREVEREYAVRVFGQVDDAKLRDLSRGVQLEDGPAAFKTIKFSGGEGINQWYNVTLTEGRNREVRRLWEAVGVQVSRLIRVRYGDIPLPKGLPRGGWTELDLAQTNYLRELVELPPETSSKVAVEKDRRRMKANQIRRAVKRHSQVSGGRRSGGRNNNG.

The S4 RNA-binding domain maps to 3-75 (EKLQKVLARA…ICRVLAYYKP (73 aa)). Asp110 serves as the catalytic Nucleophile. The segment at 256 to 291 (VEKDRRRMKANQIRRAVKRHSQVSGGRRSGGRNNNG) is disordered.

This sequence belongs to the pseudouridine synthase RsuA family.

It catalyses the reaction uridine(2605) in 23S rRNA = pseudouridine(2605) in 23S rRNA. Functionally, responsible for synthesis of pseudouridine from uracil-2605 in 23S ribosomal RNA. This is Ribosomal large subunit pseudouridine synthase B (rluB) from Escherichia coli (strain K12).